A 337-amino-acid polypeptide reads, in one-letter code: Ornithine carbamoyltransferase, catabolic (337 aa).

Residues 57 to 60 (STRT), Gln84, Arg108, and 135 to 138 (HPTQ) each bind carbamoyl phosphate. L-ornithine contacts are provided by residues Asn167, Asp231, and 235–236 (SM). Carbamoyl phosphate contacts are provided by residues 272 to 273 (CL) and Arg317.

Belongs to the aspartate/ornithine carbamoyltransferase superfamily. OTCase family.

It is found in the cytoplasm. It carries out the reaction carbamoyl phosphate + L-ornithine = L-citrulline + phosphate + H(+). It participates in amino-acid degradation; L-arginine degradation via ADI pathway; carbamoyl phosphate from L-arginine: step 2/2. Functionally, reversibly catalyzes the transfer of the carbamoyl group from carbamoyl phosphate (CP) to the N(epsilon) atom of ornithine (ORN) to produce L-citrulline. This chain is Ornithine carbamoyltransferase, catabolic (arcB), found in Streptococcus agalactiae.